The primary structure comprises 111 residues: Nucleoid-associated protein glr3498 (111 aa).

The protein belongs to the YbaB/EbfC family. Homodimer.

The protein resides in the cytoplasm. The protein localises to the nucleoid. Functionally, binds to DNA and alters its conformation. May be involved in regulation of gene expression, nucleoid organization and DNA protection. This chain is Nucleoid-associated protein glr3498, found in Gloeobacter violaceus (strain ATCC 29082 / PCC 7421).